We begin with the raw amino-acid sequence, 244 residues long: UPF0173 metal-dependent hydrolase Rcas_3617 (244 aa).

This sequence belongs to the UPF0173 family.

The sequence is that of UPF0173 metal-dependent hydrolase Rcas_3617 from Roseiflexus castenholzii (strain DSM 13941 / HLO8).